Consider the following 311-residue polypeptide: Aspartate carbamoyltransferase catalytic subunit (311 aa).

Residues Arg-59 and Thr-60 each contribute to the carbamoyl phosphate site. Lys-87 lines the L-aspartate pocket. Carbamoyl phosphate-binding residues include Arg-109, His-139, and Gln-142. The L-aspartate site is built by Arg-172 and Arg-224. Carbamoyl phosphate contacts are provided by Ala-265 and Pro-266.

This sequence belongs to the aspartate/ornithine carbamoyltransferase superfamily. ATCase family. In terms of assembly, heterododecamer (2C3:3R2) of six catalytic PyrB chains organized as two trimers (C3), and six regulatory PyrI chains organized as three dimers (R2).

It catalyses the reaction carbamoyl phosphate + L-aspartate = N-carbamoyl-L-aspartate + phosphate + H(+). Its pathway is pyrimidine metabolism; UMP biosynthesis via de novo pathway; (S)-dihydroorotate from bicarbonate: step 2/3. Functionally, catalyzes the condensation of carbamoyl phosphate and aspartate to form carbamoyl aspartate and inorganic phosphate, the committed step in the de novo pyrimidine nucleotide biosynthesis pathway. This Streptococcus pyogenes serotype M1 protein is Aspartate carbamoyltransferase catalytic subunit.